A 501-amino-acid chain; its full sequence is Betaine aldehyde dehydrogenase, chloroplastic (501 aa).

A chloroplast-targeting transit peptide spans 1–7 (MAIRVPS). Residue 238–243 (GSTATG) coordinates NAD(+). The Proton acceptor role is filled by Glu260. The active-site Nucleophile is Cys294.

This sequence belongs to the aldehyde dehydrogenase family. In terms of assembly, homodimer.

It is found in the plastid. It localises to the chloroplast. The catalysed reaction is betaine aldehyde + NAD(+) + H2O = glycine betaine + NADH + 2 H(+). Its pathway is amine and polyamine biosynthesis; betaine biosynthesis via choline pathway; betaine from betaine aldehyde: step 1/1. This Amaranthus hypochondriacus (Prince-of-Wales feather) protein is Betaine aldehyde dehydrogenase, chloroplastic (BADH4).